The sequence spans 561 residues: Acyl-CoA ligase ppsA (561 aa).

A glycan (N-linked (GlcNAc...) asparagine) is linked at Asn-21. The chain crosses the membrane as a helical span at residues 71–91; the sequence is SILYPALFLAIVGVGAVYMGA. AMP is bound at residue 203 to 214; the sequence is MFATSGTSGLPK. N-linked (GlcNAc...) asparagine glycosylation occurs at Asn-396. Positions 462–540 are AMP-binding; sequence ELEAELAQHP…DSIPRNSGGK (79 aa).

The protein belongs to the ATP-dependent AMP-binding enzyme family.

It localises to the membrane. It catalyses the reaction acetate + ATP + CoA = acetyl-CoA + ADP + phosphate. The enzyme catalyses propanoate + ATP + CoA = propanoyl-CoA + AMP + diphosphate. The protein operates within secondary metabolite biosynthesis. Functionally, acyl-CoA ligase; part of the gene cluster that mediates the biosynthesis of 2,4'-dihydroxy-3'-methoxypropiophenone. The first step of the pathway is the conversion of acetate into acetyl-CoA by the acyl-CoA ligase ppsA. Acetyl-CoA is then used as a starter unit by the polyketide synthase ppsB and condensed with 4 malonyl-CoA unit to produce the pentaketide backbone. During polyketide extension, the polykedite chain is probably reduced and dehydrated by the KR and PT domains, respectively. O-methylation seems to be catalyzed by an unknown methyltransferase rather than by the CMeT domain of ppsB. Two hydroxylations and one further decarboxylation step catalyzed by yet unknown enzymes are then required to yield 4'-hydroxy-3'-methoxypropiophenone. PpsC functions as a carrier protein to transport 4'-hydroxy-3'-methoxypropiophenone to a specific cell compartment in which 4'-hydroxy-3'-methoxypropiophenone is hydroxylated to 2,4'-dihydroxy-3'-methoxypropiophenone by a still to be identified enzyme. The protein is Acyl-CoA ligase ppsA of Aspergillus oryzae (strain ATCC 42149 / RIB 40) (Yellow koji mold).